The sequence spans 448 residues: Methylenetetrahydrofolate--tRNA-(uracil-5-)-methyltransferase TrmFO (448 aa).

Position 13 to 18 (13 to 18 (GAGLAG)) interacts with FAD.

It belongs to the MnmG family. TrmFO subfamily. Requires FAD as cofactor.

The protein localises to the cytoplasm. It carries out the reaction uridine(54) in tRNA + (6R)-5,10-methylene-5,6,7,8-tetrahydrofolate + NADH + H(+) = 5-methyluridine(54) in tRNA + (6S)-5,6,7,8-tetrahydrofolate + NAD(+). The enzyme catalyses uridine(54) in tRNA + (6R)-5,10-methylene-5,6,7,8-tetrahydrofolate + NADPH + H(+) = 5-methyluridine(54) in tRNA + (6S)-5,6,7,8-tetrahydrofolate + NADP(+). Its function is as follows. Catalyzes the folate-dependent formation of 5-methyl-uridine at position 54 (M-5-U54) in all tRNAs. This is Methylenetetrahydrofolate--tRNA-(uracil-5-)-methyltransferase TrmFO from Streptococcus pyogenes serotype M28 (strain MGAS6180).